A 101-amino-acid chain; its full sequence is Small ribosomal subunit protein uS17 (101 aa).

The protein belongs to the universal ribosomal protein uS17 family. In terms of assembly, part of the 30S ribosomal subunit.

Functionally, one of the primary rRNA binding proteins, it binds specifically to the 5'-end of 16S ribosomal RNA. The sequence is that of Small ribosomal subunit protein uS17 from Kosmotoga olearia (strain ATCC BAA-1733 / DSM 21960 / TBF 19.5.1).